Reading from the N-terminus, the 66-residue chain is Large ribosomal subunit protein uL29 (66 aa).

It belongs to the universal ribosomal protein uL29 family.

The polypeptide is Large ribosomal subunit protein uL29 (Bartonella quintana (strain Toulouse) (Rochalimaea quintana)).